Consider the following 126-residue polypeptide: Large ribosomal subunit protein bL12 (126 aa).

It belongs to the bacterial ribosomal protein bL12 family. Homodimer. Part of the ribosomal stalk of the 50S ribosomal subunit. Forms a multimeric L10(L12)X complex, where L10 forms an elongated spine to which 2 to 4 L12 dimers bind in a sequential fashion. Binds GTP-bound translation factors.

Its function is as follows. Forms part of the ribosomal stalk which helps the ribosome interact with GTP-bound translation factors. Is thus essential for accurate translation. This chain is Large ribosomal subunit protein bL12, found in Teredinibacter turnerae (strain ATCC 39867 / T7901).